A 432-amino-acid chain; its full sequence is Glutamyl-tRNA reductase (432 aa).

Substrate contacts are provided by residues 49–52 (TCNR), S109, 114–116 (EGQ), and Q120. C50 functions as the Nucleophile in the catalytic mechanism. 189–194 (GAGKMS) contributes to the NADP(+) binding site.

This sequence belongs to the glutamyl-tRNA reductase family. In terms of assembly, homodimer.

It carries out the reaction (S)-4-amino-5-oxopentanoate + tRNA(Glu) + NADP(+) = L-glutamyl-tRNA(Glu) + NADPH + H(+). It participates in porphyrin-containing compound metabolism; protoporphyrin-IX biosynthesis; 5-aminolevulinate from L-glutamyl-tRNA(Glu): step 1/2. Its pathway is porphyrin-containing compound metabolism; chlorophyll biosynthesis. Catalyzes the NADPH-dependent reduction of glutamyl-tRNA(Glu) to glutamate 1-semialdehyde (GSA). The sequence is that of Glutamyl-tRNA reductase from Cyanothece sp. (strain PCC 7425 / ATCC 29141).